A 458-amino-acid polypeptide reads, in one-letter code: Methylenetetrahydrofolate--tRNA-(uracil-5-)-methyltransferase TrmFO (458 aa).

11 to 16 (GGGMAG) lines the FAD pocket.

The protein belongs to the MnmG family. TrmFO subfamily. It depends on FAD as a cofactor.

It is found in the cytoplasm. It carries out the reaction uridine(54) in tRNA + (6R)-5,10-methylene-5,6,7,8-tetrahydrofolate + NADH + H(+) = 5-methyluridine(54) in tRNA + (6S)-5,6,7,8-tetrahydrofolate + NAD(+). The catalysed reaction is uridine(54) in tRNA + (6R)-5,10-methylene-5,6,7,8-tetrahydrofolate + NADPH + H(+) = 5-methyluridine(54) in tRNA + (6S)-5,6,7,8-tetrahydrofolate + NADP(+). In terms of biological role, catalyzes the folate-dependent formation of 5-methyl-uridine at position 54 (M-5-U54) in all tRNAs. This chain is Methylenetetrahydrofolate--tRNA-(uracil-5-)-methyltransferase TrmFO, found in Jannaschia sp. (strain CCS1).